The sequence spans 921 residues: Phototropin-1A (921 aa).

Positions 1 to 11 (MASKGTEGGHG) are enriched in gly residues. 2 disordered regions span residues 1–59 (MASK…SPFL) and 88–118 (TGLPQGVSARPSSGSARTSSEDNPQQQQSAA). The span at 40-51 (SSASSFRTAAAA) shows a compositional bias: low complexity. The span at 97 to 117 (RPSSGSARTSSEDNPQQQQSA) shows a compositional bias: polar residues. The PAS 1 domain maps to 123-197 (VSEELRAALS…KIRQSLANGS (75 aa)). FMN contacts are provided by residues 172-177 (NCRFLQ), arginine 190, asparagine 205, asparagine 215, and glutamine 236. Residue cysteine 173 is modified to S-4a-FMN cysteine. The region spanning 197–251 (SNYCGRILNYKKDGTPFWNLLTIAPIKDEDGRLLKFIGMQVEVSKYTEGKKDTVV) is the PAC 1 domain. Over residues 286–295 (RSLSESSNNT) the composition is skewed to polar residues. Disordered stretches follow at residues 286–347 (RSLS…NRTR) and 364–390 (SVEKNMLKPRDEDPLIDSDDERPESFE). Basic and acidic residues-rich tracts occupy residues 312–321 (PSKRSSESGS) and 364–376 (SVEKNMLKPRDED). The 74-residue stretch at 400–473 (RGIDLATTLE…RKIRDAIDNQ (74 aa)) folds into the PAS 2 domain. FMN is bound by residues 449-454 (NCRFLQ), arginine 467, asparagine 482, asparagine 492, and glutamine 513. At cysteine 450 the chain carries S-4a-FMN cysteine. The 55-residue stretch at 474-528 (AEVTVQLINYTKSGKKFWNLFHLQPMRDQKGDVQYFIGVQLDGTEHVQDDAAKEG) folds into the PAC 2 domain. One can recognise a Protein kinase domain in the interval 594–881 (FRPVKPLGSG…ANEIKGHPFF (288 aa)). ATP is bound by residues 600 to 608 (LGSGDTGSV) and lysine 623. Catalysis depends on aspartate 719, which acts as the Proton acceptor.

The protein belongs to the protein kinase superfamily. Ser/Thr protein kinase family. In terms of assembly, homodimer. Requires FMN as cofactor. In terms of processing, autophosphorylated in response to blue light irradiation. 2 molecules of FMN bind covalently to cysteines after exposure to blue light and are reversed in the dark. As to expression, highly expressed in coleoptiles of dark-grown seedlings.

It carries out the reaction L-seryl-[protein] + ATP = O-phospho-L-seryl-[protein] + ADP + H(+). It catalyses the reaction L-threonyl-[protein] + ATP = O-phospho-L-threonyl-[protein] + ADP + H(+). Protein kinase that acts as a blue light photoreceptor in a signal-transduction pathway for phototropic responses. Regulates a wide range of physiological activities in plants that maximize the efficiency of photosynthesis, such as chloroplast relocations, stomata opening, and leaf expansion. This is Phototropin-1A (PHOT1A) from Oryza sativa subsp. japonica (Rice).